Here is a 134-residue protein sequence, read N- to C-terminus: Phosphoribosyl-AMP cyclohydrolase (134 aa).

Position 77 (Asp77) interacts with Mg(2+). Cys78 lines the Zn(2+) pocket. Mg(2+) is bound by residues Asp79 and Asp81. Residues Cys95 and Cys102 each contribute to the Zn(2+) site.

Belongs to the PRA-CH family. In terms of assembly, homodimer. It depends on Mg(2+) as a cofactor. Requires Zn(2+) as cofactor.

Its subcellular location is the cytoplasm. The catalysed reaction is 1-(5-phospho-beta-D-ribosyl)-5'-AMP + H2O = 1-(5-phospho-beta-D-ribosyl)-5-[(5-phospho-beta-D-ribosylamino)methylideneamino]imidazole-4-carboxamide. Its pathway is amino-acid biosynthesis; L-histidine biosynthesis; L-histidine from 5-phospho-alpha-D-ribose 1-diphosphate: step 3/9. Catalyzes the hydrolysis of the adenine ring of phosphoribosyl-AMP. This chain is Phosphoribosyl-AMP cyclohydrolase, found in Pseudomonas paraeruginosa (strain DSM 24068 / PA7) (Pseudomonas aeruginosa (strain PA7)).